Consider the following 77-residue polypeptide: Putative neurotoxin 2 (77 aa).

The signal sequence occupies residues 1 to 25 (MKAFIVILSIAIVLLLIVSIKETSA). Residues 26–46 (KDCKQECVKRYTNGDFTNFFK) constitute a propeptide that is removed on maturation.

It belongs to the scolopendra neurotoxin 3 family. Contains 2 disulfide bonds. In terms of tissue distribution, expressed by the venom gland.

Its subcellular location is the secreted. This chain is Putative neurotoxin 2, found in Scolopendra mutilans (Chinese red-headed centipede).